Here is a 155-residue protein sequence, read N- to C-terminus: 6,7-dimethyl-8-ribityllumazine synthase (155 aa).

5-amino-6-(D-ribitylamino)uracil contacts are provided by residues Phe22, 56–58 (AFE), and 80–82 (AVI). 85-86 (ST) is a (2S)-2-hydroxy-3-oxobutyl phosphate binding site. The active-site Proton donor is His88. 5-amino-6-(D-ribitylamino)uracil is bound at residue Phe113. Arg127 provides a ligand contact to (2S)-2-hydroxy-3-oxobutyl phosphate.

Belongs to the DMRL synthase family.

The catalysed reaction is (2S)-2-hydroxy-3-oxobutyl phosphate + 5-amino-6-(D-ribitylamino)uracil = 6,7-dimethyl-8-(1-D-ribityl)lumazine + phosphate + 2 H2O + H(+). Its pathway is cofactor biosynthesis; riboflavin biosynthesis; riboflavin from 2-hydroxy-3-oxobutyl phosphate and 5-amino-6-(D-ribitylamino)uracil: step 1/2. Functionally, catalyzes the formation of 6,7-dimethyl-8-ribityllumazine by condensation of 5-amino-6-(D-ribitylamino)uracil with 3,4-dihydroxy-2-butanone 4-phosphate. This is the penultimate step in the biosynthesis of riboflavin. This Caldicellulosiruptor bescii (strain ATCC BAA-1888 / DSM 6725 / KCTC 15123 / Z-1320) (Anaerocellum thermophilum) protein is 6,7-dimethyl-8-ribityllumazine synthase.